Here is a 209-residue protein sequence, read N- to C-terminus: Imidazoleglycerol-phosphate dehydratase (209 aa).

It belongs to the imidazoleglycerol-phosphate dehydratase family.

The protein localises to the cytoplasm. It carries out the reaction D-erythro-1-(imidazol-4-yl)glycerol 3-phosphate = 3-(imidazol-4-yl)-2-oxopropyl phosphate + H2O. Its pathway is amino-acid biosynthesis; L-histidine biosynthesis; L-histidine from 5-phospho-alpha-D-ribose 1-diphosphate: step 6/9. The chain is Imidazoleglycerol-phosphate dehydratase from Nostoc sp. (strain PCC 7120 / SAG 25.82 / UTEX 2576).